The sequence spans 127 residues: Small ribosomal subunit protein bS6 (127 aa).

The segment at 96-127 is disordered; it reads VTTPSPMMKEEKSRSLTPAAGDEGKPAEAAEA. Over residues 117–127 the composition is skewed to basic and acidic residues; sequence DEGKPAEAAEA.

It belongs to the bacterial ribosomal protein bS6 family.

Functionally, binds together with bS18 to 16S ribosomal RNA. The chain is Small ribosomal subunit protein bS6 from Azoarcus sp. (strain BH72).